The following is a 59-amino-acid chain: Small ribosomal subunit protein bS21 (59 aa).

The interval 39–59 is disordered; it reads ETPVEKYKRKQRLKNRTKRRR. The span at 45-59 shows a compositional bias: basic residues; the sequence is YKRKQRLKNRTKRRR.

It belongs to the bacterial ribosomal protein bS21 family.

In Prochlorococcus marinus (strain SARG / CCMP1375 / SS120), this protein is Small ribosomal subunit protein bS21.